The following is a 1039-amino-acid chain: Protein male-specific lethal-1 (1039 aa).

Over residues 1-13 the composition is skewed to basic residues; that stretch reads MDKRFKWPPKKRA. 2 disordered regions span residues 1–44 and 171–199; these read MDKR…HLHQ and RRKN…QKLI. Serine 18 carries the phosphoserine modification. Serine 238 is modified (phosphoserine). Disordered regions lie at residues 244 to 266, 358 to 454, 485 to 691, and 729 to 799; these read HAGA…GEFN, GQSV…GNQN, KKDK…EIDV, and IYPP…SSTT. Residues 255 to 266 are compositionally biased toward basic and acidic residues; it reads KRSESKGRGEFN. Positions 368–392 are enriched in acidic residues; that stretch reads EEDDDEDDEDDENSDKDDDSEEDDY. Over residues 397–407 the composition is skewed to basic and acidic residues; it reads SDADVNARTEE. Positions 431–445 are enriched in polar residues; sequence AHSTPNHQQKSSTQA. Position 433 is a phosphoserine (serine 433). Phosphothreonine is present on threonine 434. Phosphoserine is present on residues serine 492 and serine 496. Composition is skewed to basic and acidic residues over residues 504 to 515 and 523 to 570; these read PHQEDAIVDHNA and PKPD…DAPK. Composition is skewed to polar residues over residues 581-592 and 609-625; these read TKTSSRESTLPK and NHQS…TQRL. Serine 585 is subject to Phosphoserine. Threonine 659 carries the post-translational modification Phosphothreonine. Residues serine 682 and serine 684 each carry the phosphoserine modification. Threonine 747 is subject to Phosphothreonine. Serine 749 bears the Phosphoserine mark. Phosphothreonine is present on residues threonine 750, threonine 751, and threonine 753. The segment covering 759-768 has biased composition (polar residues); that stretch reads QHAVTSSMDQ. Serine 764 and serine 765 each carry phosphoserine. Threonine 788 bears the Phosphothreonine mark. Serine 810 is modified (phosphoserine). Phosphothreonine occurs at positions 813 and 832. In terms of domain architecture, PEHE spans 865-983; the sequence is SLEIPKWRDV…EARDDFGVPW (119 aa). Residues serine 879 and serine 889 each carry the phosphoserine modification. The interaction with mof HAT domain stretch occupies residues 886–904; that stretch reads ELLSDATFERRHQKYVKDE. The disordered stretch occupies residues 1011–1039; sequence IPTTAAEARHQENHSSYVFPKRRKRQKNR. A Phosphothreonine modification is found at threonine 1014. Serine 1025 carries the phosphoserine modification. Residues 1030–1039 show a composition bias toward basic residues; it reads PKRRKRQKNR. The Nuclear localization signal motif lies at 1032-1037; the sequence is RRKRQK.

The protein belongs to the msl-1 family. Component of the male-specific lethal (MSL) histone acetyltransferase complex, composed of mof, mle, msl-1, msl-2 and msl-3 proteins, as well as roX1 and roX2 non-coding RNAs. Interacts (via PEHE domain) with mof (via HAT domain) and msl-3 (via MRG domain); both interactions are direct. Interacts with tamo via the nuclear localization signal. Component of a maternal MSL subcomplex composed of mof, msl-1 and msl-3. In terms of processing, phosphorylation at Ser-18, Thr743, Thr-747 and Thr-751 is required to promote phosphorylation of 'Ser-5' of the C-terminal heptapeptide repeat domain (CTD) of the largest RNA polymerase II subunit Polr2A. Phosphorylated by Cdk7 in vitro. In contrast, phosphorylation at Ser-18, Thr743, Thr-747 and Thr-751 does not affect its role in dosage compensation in males. Post-translationally, ubiquitinated by msl-2.

The protein resides in the nucleus. Its subcellular location is the chromosome. Its function is as follows. Component of the male-specific lethal (MSL) histone acetyltransferase complex, a multiprotein complex essential for elevating transcription of the single X chromosome in the male (X chromosome dosage compensation). The MSL complex specifically associates with the single X chromosome in males and mediates formation of H4K16ac, promoting a two-fold activation of X chromosome. In complex with msl-2, promotes ubiquitination of histone H2B. In addition to its role in dosage compensation in males, regulates the activity of gene promoters: acts together with Cdk7 to promote phosphorylation of 'Ser-5' of the C-terminal heptapeptide repeat domain (CTD) of the largest RNA polymerase II subunit Polr2A. This chain is Protein male-specific lethal-1, found in Drosophila melanogaster (Fruit fly).